We begin with the raw amino-acid sequence, 362 residues long: Adenosine deaminase (362 aa).

Residues H19 and H21 each coordinate Zn(2+). Substrate is bound by residues H21, D23, and G181. H208 lines the Zn(2+) pocket. E211 acts as the Proton donor in catalysis. A Zn(2+)-binding site is contributed by D300.

The protein belongs to the metallo-dependent hydrolases superfamily. Adenosine and AMP deaminases family. Adenosine deaminase subfamily. The cofactor is Zn(2+).

It carries out the reaction adenosine + H2O + H(+) = inosine + NH4(+). The catalysed reaction is 2'-deoxyadenosine + H2O + H(+) = 2'-deoxyinosine + NH4(+). Catalyzes the hydrolytic deamination of adenosine and 2-deoxyadenosine. This Mycobacterium sp. (strain MCS) protein is Adenosine deaminase.